A 715-amino-acid polypeptide reads, in one-letter code: Patatin-like phospholipase domain-containing protein ATEG_02594 (715 aa).

A helical membrane pass occupies residues W84–T104. A PNPLA domain is found at L274–N465. The short motif at G305 to G309 is the GXSXG element. The active-site Nucleophile is the S307. The active-site Proton acceptor is the D452. Residues T613 to Q715 form a disordered region. Over residues R652–D661 the composition is skewed to basic and acidic residues. Over residues A665 to A678 the composition is skewed to polar residues.

Belongs to the PLPL family.

It is found in the membrane. In terms of biological role, probable lipid hydrolase. The protein is Patatin-like phospholipase domain-containing protein ATEG_02594 of Aspergillus terreus (strain NIH 2624 / FGSC A1156).